The following is a 325-amino-acid chain: Phage-like element PBSX protein XkdQ (325 aa).

This sequence to B.subtilis YqbQ.

In Bacillus subtilis (strain 168), this protein is Phage-like element PBSX protein XkdQ (xkdQ).